The following is a 507-amino-acid chain: Transcription factor SOX-9 (507 aa).

Disordered regions lie at residues 1 to 67 (MNLL…SEED) and 160 to 250 (RLRV…AGKV). The segment covering 30 to 41 (SAGSPCPSGSGS) has biased composition (low complexity). The span at 42-52 (DTENTRPQENT) shows a compositional bias: polar residues. Basic and acidic residues-rich tracts occupy residues 56 to 67 (GEPDLKKESEED) and 160 to 174 (RLRV…DYKY). The segment at 63 to 103 (ESEEDKFPVCIREAVSQVLKGYDWTLVPMPVRVNGSSKNKP) is dimerization (DIM). Residues 63-103 (ESEEDKFPVCIREAVSQVLKGYDWTLVPMPVRVNGSSKNKP) form a PQA region. Ser64 carries the phosphoserine; by PKA modification. The HMG box DNA-binding region spans 105–173 (VKRPMNAFMV…QHKKDHPDYK (69 aa)). Ser211 is subject to Phosphoserine; by PKA. The segment at 224–307 (PGEHSGQSQG…LPPNGHPGVP (84 aa)) is transactivation domain (TAM). Short sequence motifs (9aaTAD) lie at residues 275–284 (IGELSSDVIS) and 290–298 (DVNEFDQYL). Residues 335–429 (WMSKQQAPPP…PFNLPHYSPS (95 aa)) are disordered. A compositionally biased stretch (pro residues) spans 341 to 369 (APPPPPQQPPQAPQAPQAPPQQQAPPQQP). The span at 378–420 (HTLTTLSSEPGQSQRTHIKTEQLSPSHYSEQQQHSPQQISYSP) shows a compositional bias: polar residues. The tract at residues 392–507 (RTHIKTEQLS…QPVYTQLTRP (116 aa)) is transactivation domain (TAC). Lys396 participates in a covalent cross-link: Glycyl lysine isopeptide (Lys-Gly) (interchain with G-Cter in ubiquitin). The 9aaTAD 3 signature appears at 458–466 (SGLYSTFTY). The segment at 477 to 507 (PIADTSGVPSIPQTHSPQHWEQPVYTQLTRP) is disordered. Polar residues predominate over residues 483–507 (GVPSIPQTHSPQHWEQPVYTQLTRP).

As to quaternary structure, homodimer; homodimerization is required for activity. Interacts (via C-terminus) with ZNF219; forming a complex that binds to the COL2A1 promoter and activates COL2A1 expression. Interacts with DDRGK1. Interacts with EP300/p300. Interacts with beta-catenin (CTNNB1); inhibiting CTNNB1 activity by competing with the binding sites of TCF/LEF within CTNNB1. In terms of processing, acetylated; acetylation impairs nuclear localization and ability to transactivate expression of target genes. Deacetylated by SIRT1. Phosphorylation at Ser-64 and Ser-211 by PKA increases transcriptional activity and may help delay chondrocyte maturation downstream of PTHLH/PTHrP signaling. Phosphorylation at either Ser-64 or Ser-211 is required for sumoylation, but phosphorylation is not dependent on sumoylation. Phosphorylated on tyrosine residues; tyrosine dephosphorylation by PTPN11/SHP2 blocks SOX9 phosphorylation by PKA and subsequent SUMOylation. Post-translationally, sumoylated; phosphorylation at either Ser-64 or Ser-211 is required for sumoylation. Sumoylation is induced by BMP signaling pathway. In terms of processing, ubiquitinated; ubiquitination leads to proteasomal degradation and is negatively regulated by DDRGK1. As to expression, expressed in the intestinal epithelium (at protein level). Expressed in progenitor cells in various organs, including chondroprogenitors, osteoprogenitors and preadipocytes, but is not expressed in most differentiated cell types such as osteoblasts and adipocytes, with the exception of chondrocytes. Highly expressed in developing chondrogenic tissues. Also expressed in some non-chondrogenic tissues such as notochord, otic vesicle and neural tube.

It is found in the nucleus. Its function is as follows. Transcription factor that plays a key role in chondrocytes differentiation and skeletal development. Specifically binds the 5'-ACAAAG-3' DNA motif present in enhancers and super-enhancers and promotes expression of genes important for chondrogenesis, including cartilage matrix protein-coding genes COL2A1, COL4A2, COL9A1, COL11A2 and ACAN, SOX5 and SOX6. Also binds to some promoter regions. Plays a central role in successive steps of chondrocyte differentiation. Absolutely required for precartilaginous condensation, the first step in chondrogenesis during which skeletal progenitors differentiate into prechondrocytes. Together with SOX5 and SOX6, required for overt chondrogenesis when condensed prechondrocytes differentiate into early stage chondrocytes, the second step in chondrogenesis. Later, required to direct hypertrophic maturation and block osteoblast differentiation of growth plate chondrocytes: maintains chondrocyte columnar proliferation, delays prehypertrophy and then prevents osteoblastic differentiation of chondrocytes by lowering beta-catenin (CTNNB1) signaling and RUNX2 expression. Also required for chondrocyte hypertrophy, both indirectly, by keeping the lineage fate of chondrocytes, and directly, by remaining present in upper hypertrophic cells and transactivating COL10A1 along with MEF2C. Low lipid levels are the main nutritional determinant for chondrogenic commitment of skeletal progenitor cells: when lipids levels are low, FOXO (FOXO1 and FOXO3) transcription factors promote expression of SOX9, which induces chondrogenic commitment and suppresses fatty acid oxidation. Mechanistically, helps, but is not required, to remove epigenetic signatures of transcriptional repression and deposit active promoter and enhancer marks at chondrocyte-specific genes. Acts in cooperation with the Hedgehog pathway-dependent GLI (GLI1 and GLI3) transcription factors. In addition to cartilage development, also acts as a regulator of proliferation and differentiation in epithelial stem/progenitor cells: involved in the lung epithelium during branching morphogenesis, by balancing proliferation and differentiation and regulating the extracellular matrix. Controls epithelial branching during kidney development. The polypeptide is Transcription factor SOX-9 (Mus musculus (Mouse)).